Here is a 179-residue protein sequence, read N- to C-terminus: Large ribosomal subunit protein uL5 (179 aa).

It belongs to the universal ribosomal protein uL5 family. As to quaternary structure, part of the 50S ribosomal subunit; part of the 5S rRNA/L5/L18/L25 subcomplex. Contacts the 5S rRNA and the P site tRNA. Forms a bridge to the 30S subunit in the 70S ribosome.

Its function is as follows. This is one of the proteins that bind and probably mediate the attachment of the 5S RNA into the large ribosomal subunit, where it forms part of the central protuberance. In the 70S ribosome it contacts protein S13 of the 30S subunit (bridge B1b), connecting the 2 subunits; this bridge is implicated in subunit movement. Contacts the P site tRNA; the 5S rRNA and some of its associated proteins might help stabilize positioning of ribosome-bound tRNAs. This Microcystis aeruginosa (strain NIES-843 / IAM M-2473) protein is Large ribosomal subunit protein uL5.